Here is a 573-residue protein sequence, read N- to C-terminus: Probable cytochrome c oxidase subunit 1 (573 aa).

Residues 40-60 form a helical membrane-spanning segment; sequence IGIMYCVACISFFFIGGLLAL. Position 86 (histidine 86) interacts with Fe(II)-heme a. The next 6 membrane-spanning stretches (helical) occupy residues 89–109, 121–141, 170–190, 213–233, 258–278, and 290–310; these read IMLLFYATPIVFGFANLVLPL, LNAFSFWLFVFGATIGAAGFI, LWIMGLIVAGLGTILGAVNMI, IMVTSILILIAFPLLTAALFG, LFWFFGHPEVYIIALPFFGIV, and IFGYTTLVYATLSIAALSVAV. Residues histidine 264 and tyrosine 268 each coordinate Cu cation. Residues 264–268 constitute a cross-link (1'-histidyl-3'-tyrosine (His-Tyr)); sequence HPEVY. Positions 313 and 314 each coordinate Cu cation. 2 consecutive transmembrane segments (helical) span residues 315–335 and 359–379; these read MFATGAVLLPFFSFMTYLIAV and MLFSVGFMVTFLLGGLTGVLL. Histidine 397 is a binding site for heme a3. 3 helical membrane passes run 398–418, 433–453, and 476–496; these read FHYVLFGTIVFATFAGIYFWF, LHFWLTFIGFHTTFLVQHWLG, and VSTIGAFILGASMFPFVWNVF. Histidine 399 provides a ligand contact to Fe(II)-heme a.

It belongs to the heme-copper respiratory oxidase family.

The protein localises to the cell membrane. It carries out the reaction 4 Fe(II)-[cytochrome c] + O2 + 8 H(+)(in) = 4 Fe(III)-[cytochrome c] + 2 H2O + 4 H(+)(out). It participates in energy metabolism; oxidative phosphorylation. Cytochrome c oxidase is the component of the respiratory chain that catalyzes the reduction of oxygen to water. Subunits 1-3 form the functional core of the enzyme complex. CO I is the catalytic subunit of the enzyme. Electrons originating in cytochrome c are transferred via the copper A center of subunit 2 and heme A of subunit 1 to the bimetallic center formed by heme A3 and copper B. The protein is Probable cytochrome c oxidase subunit 1 (ctaD) of Mycobacterium bovis (strain ATCC BAA-935 / AF2122/97).